Here is a 247-residue protein sequence, read N- to C-terminus: Phosphoglycerate mutase 1 (247 aa).

Residues 8–15 and 21–22 each bind substrate; these read RHGQSEWN and TG. Residue His9 is the Tele-phosphohistidine intermediate of the active site. Ser12 bears the Phosphoserine mark. Lys31 participates in a covalent cross-link: Glycyl lysine isopeptide (Lys-Gly) (interchain with G-Cter in ubiquitin). Tyr49 carries the post-translational modification Phosphotyrosine. A Glycyl lysine isopeptide (Lys-Gly) (interchain with G-Cter in ubiquitin) cross-link involves residue Lys57. Residue Arg60 participates in substrate binding. Lys71 participates in a covalent cross-link: Glycyl lysine isopeptide (Lys-Gly) (interchain with G-Cter in ubiquitin). Glu87 acts as the Proton donor/acceptor in catalysis. Residues 87–90, Lys98, and 114–115 contribute to the substrate site; these read ERHY and RR. Phosphoserine occurs at positions 116, 127, and 128. Glycyl lysine isopeptide (Lys-Gly) (interchain with G-Cter in ubiquitin) cross-links involve residues Lys139 and Lys175. Residue 183–184 coordinates substrate; sequence GN. Phosphoserine is present on Ser185. Lys191 is covalently cross-linked (Glycyl lysine isopeptide (Lys-Gly) (interchain with G-Cter in ubiquitin)). Position 197 is a phosphoserine (Ser197).

This sequence belongs to the phosphoglycerate mutase family. BPG-dependent PGAM subfamily. In terms of assembly, homotetramer: dimer of dimers.

It localises to the cytoplasm. The protein resides in the mitochondrion outer membrane. Its subcellular location is the mitochondrion intermembrane space. The catalysed reaction is (2R)-2-phosphoglycerate = (2R)-3-phosphoglycerate. Its pathway is carbohydrate degradation; glycolysis; pyruvate from D-glyceraldehyde 3-phosphate: step 3/5. With respect to regulation, inhibited by inositol hexakisphosphate and benzene tri-, tetra- and hexacarboxylates. Interconversion of 3- and 2-phosphoglycerate with 2,3-bisphosphoglycerate as the primer of the reaction. Can also catalyze the reaction of EC 5.4.2.4 (synthase), but with a reduced activity. In Saccharomyces cerevisiae (strain ATCC 204508 / S288c) (Baker's yeast), this protein is Phosphoglycerate mutase 1 (GPM1).